The following is a 470-amino-acid chain: Cytochrome P450 monooxygenase FUM2 (470 aa).

Cys-414 is a binding site for heme.

This sequence belongs to the cytochrome P450 family. Heme is required as a cofactor.

It participates in mycotoxin biosynthesis. In terms of biological role, cytochrome P450 monooxygenase; part of the gene cluster that mediates the biosynthesis of fumonisins B1 (FB1), B2 (FB2), B3 (FB3), and B4 (FB4), which are carcinogenic mycotoxins. Within the pathway, FUM2 performs the C-10 hydroxylation present in FB2 and FB4 and which occurs early in the biosynthesis. The biosynthesis starts with the FUM1-catalyzed carbon chain assembly from one molecule of acetyl-CoA, eight molecules of malonyl-CoA, and two molecules of methionine (in S-adenosyl form). The C18 polyketide chain is released from the enzyme by a nucleophilic attack of a carbanion, which is derived from R-carbon of alanine by decarboxylation, on the carbonyl carbon of polyketide acyl chain. This step is catalyzed by the pyridoxal 5'-phosphate-dependent aminoacyl transferase FUM8. The resultant 3-keto intermediate is then stereospecifically reduced to a 3-hydroxyl product by reductase FUM13. Subsequent oxidations at C-10 by the cytochrome P450 monooxygenase FUM2, C-14 and C-15 by FUM6, FUM12 or FUM15, tricarballylic esterification of the hydroxyl groups on C-14 and C-15 by acyltransferase FUM14, and C-5 hydroxylation by 2-keto-glutarate-dependent dioxygenase FUM3 furnish the biosynthesis of fumonisins. The tricarballylic moieties are most likely derived from the citric acid cycle, and their addition to the carbon backbone may involve FUM7, FUM10, FUM11 and FUM14. The polypeptide is Cytochrome P450 monooxygenase FUM2 (Gibberella moniliformis (strain M3125 / FGSC 7600) (Maize ear and stalk rot fungus)).